The primary structure comprises 344 residues: Mitochondrial substrate carrier family protein D (344 aa).

The Mitochondrial intermembrane segment spans residues Met1–Asp22. Solcar repeat units lie at residues Asn17 to Tyr104, Ile119 to Lys212, and Val239 to Leu327. The helical transmembrane segment at Phe23–Ile43 threads the bilayer. Topologically, residues Lys44–Gly75 are mitochondrial matrix. Residues Ile76–Ala96 traverse the membrane as a helical segment. Residues Thr97–Asp116 are Mitochondrial intermembrane-facing. The helical transmembrane segment at Ile117–Leu137 threads the bilayer. Topologically, residues Leu138 to Lys186 are mitochondrial matrix. The chain crosses the membrane as a helical span at residues Gly187–Glu207. Over Phe208–Gly238 the chain is Mitochondrial intermembrane. Residues Val239 to Ile259 form a helical membrane-spanning segment. Residues Tyr260 to Arg301 are Mitochondrial matrix-facing. A helical transmembrane segment spans residues Gly302 to Tyr321. The Mitochondrial intermembrane portion of the chain corresponds to Glu322–Glu344.

This sequence belongs to the mitochondrial carrier (TC 2.A.29) family.

It localises to the mitochondrion inner membrane. Calcium-dependent mitochondrial solute carrier. Mitochondrial solute carriers shuttle metabolites, nucleotides, and cofactors through the mitochondrial inner membrane. This Dictyostelium discoideum (Social amoeba) protein is Mitochondrial substrate carrier family protein D (mcfD).